Reading from the N-terminus, the 210-residue chain is MGQKVHPTGFRLGTTKTWDTRWFADRNYADLLLEDIKIRAWLKKRLAHASVSKIVIERPAQKARINIHTARPGIIIGKKGGDIEKLKNDIKAITSSEVQINIVEIRKPEADAQLVAENVAQQLERRVAFRRSMKRAVTSAMRLGAEGIRINCAGRLGGAEIARTEWYREGRVPLHTLRADIDYGFAEAHTTYGIIGVKVWVYKGMLIEKK.

Residues 38–106 form the KH type-2 domain; the sequence is IRAWLKKRLA…EVQINIVEIR (69 aa).

Belongs to the universal ribosomal protein uS3 family. As to quaternary structure, part of the 30S ribosomal subunit. Forms a tight complex with proteins S10 and S14.

Functionally, binds the lower part of the 30S subunit head. Binds mRNA in the 70S ribosome, positioning it for translation. The protein is Small ribosomal subunit protein uS3 of Magnetococcus marinus (strain ATCC BAA-1437 / JCM 17883 / MC-1).